Here is a 360-residue protein sequence, read N- to C-terminus: Phospho-N-acetylmuramoyl-pentapeptide-transferase (360 aa).

Helical transmembrane passes span Ile27–Trp47, Thr73–Leu93, Ser94–Val114, Trp132–Gly152, Val168–Ser188, Gly199–Thr219, Ala236–Phe256, Val263–Leu283, Phe288–Val308, and Val338–Lys358.

Belongs to the glycosyltransferase 4 family. MraY subfamily. Mg(2+) serves as cofactor.

It is found in the cell inner membrane. It catalyses the reaction UDP-N-acetyl-alpha-D-muramoyl-L-alanyl-gamma-D-glutamyl-meso-2,6-diaminopimeloyl-D-alanyl-D-alanine + di-trans,octa-cis-undecaprenyl phosphate = di-trans,octa-cis-undecaprenyl diphospho-N-acetyl-alpha-D-muramoyl-L-alanyl-D-glutamyl-meso-2,6-diaminopimeloyl-D-alanyl-D-alanine + UMP. Its pathway is cell wall biogenesis; peptidoglycan biosynthesis. Its function is as follows. Catalyzes the initial step of the lipid cycle reactions in the biosynthesis of the cell wall peptidoglycan: transfers peptidoglycan precursor phospho-MurNAc-pentapeptide from UDP-MurNAc-pentapeptide onto the lipid carrier undecaprenyl phosphate, yielding undecaprenyl-pyrophosphoryl-MurNAc-pentapeptide, known as lipid I. The polypeptide is Phospho-N-acetylmuramoyl-pentapeptide-transferase (Pectobacterium carotovorum subsp. carotovorum (strain PC1)).